Here is a 101-residue protein sequence, read N- to C-terminus: Gamma-secretase subunit PEN-2 (101 aa).

At 1 to 17 (MNLERVSNEEKLNLCRK) the chain is on the cytoplasmic side. Residues 18–36 (YYLGGFAFLPFLWLVNIFW) constitute an intramembrane region (helical). Residues 37-57 (FFREAFIVPAYTEQSQIKGYV) lie on the Cytoplasmic side of the membrane. The helical transmembrane segment at 58–78 (WRSAVGFFLWVIVLSTWITIF) threads the bilayer. Over 79–101 (QIYRPRWGALGDYLSFTIPLGTP) the chain is Lumenal.

This sequence belongs to the PEN-2 family. In terms of assembly, the functional gamma-secretase complex is composed of at least four polypeptides: a presenilin homodimer (PSEN1 or PSEN2), nicastrin (NCSTN), APH1 (APH1A or APH1B) and PSENEN.

Its subcellular location is the endoplasmic reticulum membrane. It localises to the golgi apparatus. The protein localises to the golgi stack membrane. The protein resides in the cell membrane. It is found in the membrane. In terms of biological role, essential subunit of the gamma-secretase complex, an endoprotease complex that catalyzes the intramembrane cleavage of integral membrane proteins such as Notch receptors and APP (amyloid-beta precursor protein). The gamma-secretase complex plays a role in Notch and Wnt signaling cascades and regulation of downstream processes via its role in processing key regulatory proteins, and by regulating cytosolic CTNNB1 levels. PSENEN modulates both endoproteolysis of presenilin and gamma-secretase activity. This is Gamma-secretase subunit PEN-2 (PSENEN) from Bos taurus (Bovine).